Consider the following 277-residue polypeptide: Ribonuclease HII (277 aa).

One can recognise an RNase H type-2 domain in the interval 20-250 (KLIIGLDEAG…SKKLLKKIED (231 aa)). Residues D26, E27, and D141 each coordinate a divalent metal cation.

It belongs to the RNase HII family. Mn(2+) serves as cofactor. Requires Mg(2+) as cofactor.

It is found in the cytoplasm. It catalyses the reaction Endonucleolytic cleavage to 5'-phosphomonoester.. Functionally, endonuclease that specifically degrades the RNA of RNA-DNA hybrids. The chain is Ribonuclease HII from Methanococcus aeolicus (strain ATCC BAA-1280 / DSM 17508 / OCM 812 / Nankai-3).